A 237-amino-acid polypeptide reads, in one-letter code: Alpha-S1-casein (237 aa).

The signal sequence occupies residues 1–15 (MKLLIFSCLVTLALA). Positions 39–60 (EDPIPVSEASSSEESVHQLNRD) are disordered. Phosphoserine occurs at positions 79, 80, and 81.

This sequence belongs to the alpha-casein family. In terms of tissue distribution, mammary gland specific. Secreted in milk.

The protein resides in the secreted. Important role in the capacity of milk to transport calcium phosphate. The chain is Alpha-S1-casein (CSN1S1) from Notamacropus eugenii (Tammar wallaby).